The primary structure comprises 226 residues: Exopolysaccharide production protein ExoY (226 aa).

A helical transmembrane segment spans residues 34 to 54 (VLIAILALIALSPLFLLVMGL).

The protein belongs to the bacterial sugar transferase family.

It is found in the cell membrane. It participates in glycan metabolism; exopolysaccharide biosynthesis. Functionally, needed for the addition of the first sugar (galactose) to the isoprenoid carrier. May function as a sugar transferase. This Sinorhizobium fredii (strain NBRC 101917 / NGR234) protein is Exopolysaccharide production protein ExoY (exoY).